The chain runs to 485 residues: Metalloprotease AprA (485 aa).

Position 187 (histidine 187) interacts with Zn(2+). Residue glutamate 188 is part of the active site. Residues histidine 191 and histidine 197 each contribute to the Zn(2+) site. Ca(2+)-binding residues include arginine 268, glycine 270, threonine 272, aspartate 300, glycine 302, glycine 303, aspartate 305, threonine 342, glutamate 344, glycine 349, glycine 351, aspartate 353, asparagine 358, leucine 360, asparagine 362, glycine 366, glycine 367, alanine 368, glycine 369, aspartate 371, glycine 375, glycine 376, glycine 377, glycine 378, aspartate 380, glycine 384, glycine 385, threonine 386, glycine 387, aspartate 389, aspartate 398, aspartate 405, aspartate 415, aspartate 461, threonine 463, asparagine 465, serine 467, and aspartate 469. 3 Hemolysin-type calcium-binding repeats span residues 347 to 364 (FGGS…ANVL), 365 to 382 (KGGA…ADQL), and 383 to 395 (WGGT…VFGA).

This sequence belongs to the peptidase M10B family. It depends on Ca(2+) as a cofactor. Zn(2+) is required as a cofactor.

The protein localises to the secreted. Its function is as follows. Secreted protease which is important for P.entomophila to counteract the local immune response of Drosophila. Can degrade antimicrobial peptides (AMPs), e.g. Diptericin and Cecropin A. Thus, protects P.entomophila from the Drosophila antimicrobial peptides produced by the gut innate immune response, and promotes bacterial persistence in the Drosophila gut and killing of the host. Is responsible for maturation of pro-Monalysin to the active toxin Monalysin, by cleaving its N-terminus. The protein is Metalloprotease AprA of Pseudomonas entomophila (strain L48).